The primary structure comprises 597 residues: Kelch-like protein 21 (597 aa).

One can recognise a BTB domain in the interval 35 to 103 (LDVTLEAAGG…SYTGRVAVSG (69 aa)). The region spanning 138–239 (CLDMQDFAEA…RRFYLLAHVE (102 aa)) is the BACK domain. Kelch repeat units follow at residues 287–335 (ILVL…ALGN), 336–382 (DIYV…VLNG), 384–422 (LYVV…ACRG), 423–470 (RLYA…TLNG), 472–512 (MYFV…ALGG), and 513–560 (KLYV…SIFR). Positions 570–597 (GRGFELNSGSSDVDAGHHRLPQNPEELQ) are disordered.

As to quaternary structure, component of the BCR(KLHL21) E3 ubiquitin ligase complex, at least composed of CUL3, KLHL21 and RBX1.

It is found in the cytoplasm. The protein localises to the cytoskeleton. The protein resides in the spindle. It functions in the pathway protein modification; protein ubiquitination. Its function is as follows. Substrate-specific adapter of BCR (BTB-CUL3-RBX1) E3 ubiquitin-protein ligase complex required for efficient chromosome alignment and cytokinesis. The BCR(KLHL21) E3 ubiquitin ligase complex regulates localization of the chromosomal passenger complex (CPC) from chromosomes to the spindle midzone in anaphase and mediates the ubiquitination of AURKB. Ubiquitination of AURKB by BCR(KLHL21) E3 ubiquitin ligase complex may not lead to its degradation by the proteasome. This Rattus norvegicus (Rat) protein is Kelch-like protein 21 (Klhl21).